The primary structure comprises 301 residues: RNA polymerase II holoenzyme cyclin-like subunit (301 aa).

A Cyclin N-terminal domain is found at 53 to 142 (QQLIKLGKRT…LGECEFALIS (90 aa)).

The protein belongs to the cyclin family. Cyclin C subfamily. As to quaternary structure, component of the srb8-11 complex, a regulatory module of the Mediator complex.

It localises to the nucleus. In terms of biological role, component of the srb8-11 complex. The srb8-11 complex is a regulatory module of the Mediator complex which is itself involved in regulation of basal and activated RNA polymerase II-dependent transcription. The srb8-11 complex may be involved in the transcriptional repression of a subset of genes regulated by Mediator. It may inhibit the association of the Mediator complex with RNA polymerase II to form the holoenzyme complex. The srb8-11 complex phosphorylates the C-terminal domain (CTD) of the largest subunit of RNA polymerase II. The sequence is that of RNA polymerase II holoenzyme cyclin-like subunit (ssn8) from Aspergillus terreus (strain NIH 2624 / FGSC A1156).